Here is a 360-residue protein sequence, read N- to C-terminus: Phospho-N-acetylmuramoyl-pentapeptide-transferase (360 aa).

Residues 1 to 25 lie on the Periplasmic side of the membrane; sequence MLVWLAEHLVKYYSGFNVFSYLTFR. A helical membrane pass occupies residues 26-46; sequence AIVSLLTALFISLWMGPRMIA. The Cytoplasmic segment spans residues 47–71; it reads HLQKLSFGQVVRNDGPESHFSKRGT. Residues 72 to 92 form a helical membrane-spanning segment; sequence PTMGGIMILTAIVISVLLWAY. Residue Pro-93 is a topological domain, periplasmic. A helical transmembrane segment spans residues 94 to 114; it reads SNPYVWCVLVVLVGYGIIGFV. The Cytoplasmic segment spans residues 115-131; sequence DDYRKVVRKDTKGLIAR. Residues 132 to 152 form a helical membrane-spanning segment; that stretch reads WKYFWMSVIALGVAFALYLAG. Residues 153-167 are Periplasmic-facing; sequence KDTPATQLVVPFFKD. The chain crosses the membrane as a helical span at residues 168 to 188; it reads VMPQLGLFYILLAYFVIVGTG. Topologically, residues 189 to 198 are cytoplasmic; the sequence is NAVNLTDGLD. The chain crosses the membrane as a helical span at residues 199–219; that stretch reads GLAIMPTVFVAGGFALVAWAT. The Periplasmic portion of the chain corresponds to 220–235; sequence GNMNFASYLHIPYLRH. A helical transmembrane segment spans residues 236 to 256; that stretch reads AGELVIVCTAIVGAGLGFLWF. Over 257–262 the chain is Cytoplasmic; that stretch reads NTYPAQ. The helical transmembrane segment at 263–283 threads the bilayer; that stretch reads VFMGDVGSLALGGALGIIAVL. The Periplasmic segment spans residues 284-287; that stretch reads LRQE. A helical transmembrane segment spans residues 288-308; that stretch reads FLLVIMGGVFVVETLSVILQV. Residues 309 to 337 lie on the Cytoplasmic side of the membrane; sequence GSFKLRGQRIFRMAPIHHHYELKGWPEPR. Residues 338-358 traverse the membrane as a helical segment; it reads VIVRFWIISLMLVLIGLATLK. Over 359–360 the chain is Periplasmic; it reads VR.

This sequence belongs to the glycosyltransferase 4 family. MraY subfamily. Requires Mg(2+) as cofactor.

It is found in the cell inner membrane. The catalysed reaction is UDP-N-acetyl-alpha-D-muramoyl-L-alanyl-gamma-D-glutamyl-meso-2,6-diaminopimeloyl-D-alanyl-D-alanine + di-trans,octa-cis-undecaprenyl phosphate = di-trans,octa-cis-undecaprenyl diphospho-N-acetyl-alpha-D-muramoyl-L-alanyl-D-glutamyl-meso-2,6-diaminopimeloyl-D-alanyl-D-alanine + UMP. It participates in cell wall biogenesis; peptidoglycan biosynthesis. In terms of biological role, catalyzes the initial step of the lipid cycle reactions in the biosynthesis of the cell wall peptidoglycan: transfers peptidoglycan precursor phospho-MurNAc-pentapeptide from UDP-MurNAc-pentapeptide onto the lipid carrier undecaprenyl phosphate, yielding undecaprenyl-pyrophosphoryl-MurNAc-pentapeptide, known as lipid I. This chain is Phospho-N-acetylmuramoyl-pentapeptide-transferase, found in Escherichia coli O7:K1 (strain IAI39 / ExPEC).